The sequence spans 530 residues: Alpha-(1,3)-fucosyltransferase 4 (530 aa).

Disordered stretches follow at residues 1-48 (MRRL…RAVP) and 66-112 (HLGG…STPA). Topologically, residues 1 to 147 (MRRLWGAARK…GGRRGWRRGR (147 aa)) are cytoplasmic. Residues 88–106 (ASGERQRRLEPQLQHESRC) are compositionally biased toward basic and acidic residues. A helical; Signal-anchor for type II membrane protein membrane pass occupies residues 148–172 (GLPWTVCVLAAAGLTCTALITYACW). Residues 173–530 (GQLPPLPWAS…IRNLASWFER (358 aa)) are Lumenal-facing. N-linked (GlcNAc...) asparagine glycans are attached at residues Asn216 and Asn315.

The protein belongs to the glycosyltransferase 10 family. As to expression, expressed at low levels in bone marrow-derived mesenchymal stem cells. In terms of tissue distribution, expressed in cord blood immature promyelocytes and in peripheral blood myeloid and lymphoid cell populations.

Its subcellular location is the golgi apparatus. It localises to the golgi stack membrane. It catalyses the reaction a beta-D-galactosyl-(1-&gt;4)-N-acetyl-beta-D-glucosaminyl derivative + GDP-beta-L-fucose = a beta-D-galactosyl-(1-&gt;4)-[alpha-L-fucosyl-(1-&gt;3)]-N-acetyl-beta-D-glucosaminyl derivative + GDP + H(+). The catalysed reaction is an N-acetyl-alpha-neuraminyl-(2-&gt;3)-beta-D-galactosyl-(1-&gt;4)-N-acetyl-beta-D-glucosaminyl derivative + GDP-beta-L-fucose = an alpha-Neu5Ac-(2-&gt;3)-beta-D-Gal-(1-&gt;4)-[alpha-L-Fuc-(1-&gt;3)]-beta-D-GlcNAc derivative + GDP + H(+). It carries out the reaction an alpha-Neu5Ac-(2-&gt;3)-beta-D-Gal-(1-&gt;4)-beta-D-GlcNAc-(1-&gt;3)-beta-D-Gal-(1-&gt;4)-beta-D-GlcNAc derivative + GDP-beta-L-fucose = an alpha-Neu5Ac-(2-&gt;3)-beta-D-Gal-(1-&gt;4)-beta-D-GlcNAc-(1-&gt;3)-beta-D-Gal-(1-&gt;4)-[alpha-L-Fuc-(1-&gt;3)]-beta-D-GlcNAc derivative + GDP + H(+). The enzyme catalyses an alpha-Neu5Ac-(2-&gt;3)-beta-D-Gal-(1-&gt;4)-beta-D-GlcNAc6S derivative + GDP-beta-L-fucose = an alpha-Neu5Ac-(2-&gt;3)-beta-D-Gal-(1-&gt;4)-[alpha-L-Fuc-(1-&gt;3)]-beta-D-GlcNAc6S derivative + GDP + H(+). Its pathway is protein modification; protein glycosylation. Catalyzes alpha(1-&gt;3) linkage of fucosyl moiety transferred from GDP-beta-L-fucose to N-acetyl glucosamine (GlcNAc) within type 2 lactosamine (LacNAc, Gal-beta(1-&gt;4)GlcNAc) glycan attached to N- or O-linked glycoproteins. Robustly fucosylates nonsialylated distal LacNAc unit of the polylactosamine chain to form Lewis X antigen (CD15), a glycan determinant known to mediate important cellular functions in development and immunity. Fucosylates with lower efficiency sialylated LacNAc acceptors to form sialyl Lewis X and 6-sulfo sialyl Lewis X determinants that serve as recognition epitopes for C-type lectins. Together with FUT7 contributes to SELE, SELL and SELP selectin ligand biosynthesis and selectin-dependent lymphocyte homing, leukocyte migration and blood leukocyte homeostasis. In a cell type specific manner, may also fucosylate the internal LacNAc unit of the polylactosamine chain to form VIM-2 antigen that serves as recognition epitope for SELE. In terms of biological role, does not generate Lewis X antigens. The chain is Alpha-(1,3)-fucosyltransferase 4 from Homo sapiens (Human).